The sequence spans 533 residues: Beta-glucosidase 10 (533 aa).

The first 23 residues, 1–23 (MAVAGAMVMSGGVLLLLLAFTCA), serve as a signal peptide directing secretion. A beta-D-glucoside is bound at residue glutamine 53. Asparagine 122 carries N-linked (GlcNAc...) asparagine glycosylation. Residues histidine 157 and 202-203 (NE) each bind a beta-D-glucoside. Glutamate 203 (proton donor) is an active-site residue. Cysteine 222 and cysteine 230 are disulfide-bonded. Tyrosine 369 provides a ligand contact to a beta-D-glucoside. Asparagine 384 carries N-linked (GlcNAc...) asparagine glycosylation. Glutamate 440 provides a ligand contact to a beta-D-glucoside. Glutamate 440 functions as the Nucleophile in the catalytic mechanism. N-linked (GlcNAc...) asparagine glycosylation is present at asparagine 448. A beta-D-glucoside is bound by residues tryptophan 489, 496–497 (EW), and phenylalanine 505.

Belongs to the glycosyl hydrolase 1 family.

It carries out the reaction Hydrolysis of terminal, non-reducing beta-D-glucosyl residues with release of beta-D-glucose.. In Oryza sativa subsp. japonica (Rice), this protein is Beta-glucosidase 10 (BGLU10).